The following is a 441-amino-acid chain: MRQTNTHLETFSLFDDVCTCLLVDKVFYWSQIHKVRKLVDRSIERMESCSIINIITKYIIEQTDLDQAAKNILQFRELDPLLRRLSSTSLLAFTRHLKYYLSLYLPSCKFEICSTNQYFSSSKPEACVIARESINAGEDITDLCGTIIKLSPKEERNIGIGKDFSILHSSRLDSMCLFLGPARFVNHDCNANCRFNTSGKRIWLRCVRDIKPGEEITTFYSSNYFGLENCECLCVSCERMGINGFKKLFHTSATSTSCSSKSSSDVSDLSSLPQSNRYVISEEDRSFLNIWDSGGELSDASSSDLDEEFSLFIPRHKKRVWSREKRLLSEMAITNHSPLLNVDDYRKFREDLWKKRHGKRKVYQCSNCSQTFINEDIQNSSAFCPKCIRHSKLFSLPWPCRHKVNRELKLEKEKEINTKRNLVTSSHSMSLRHKKAVDYQS.

Residues 108-221 enclose the SET domain; the sequence is CKFEICSTNQ…PGEEITTFYS (114 aa).

This sequence belongs to the class V-like SAM-binding methyltransferase superfamily. Histone-lysine methyltransferase family. Suvar4-20 subfamily.

It is found in the nucleus. The protein localises to the chromosome. The catalysed reaction is L-lysyl(20)-[histone H4] + 3 S-adenosyl-L-methionine = N(6),N(6),N(6)-trimethyl-L-lysyl(20)-[histone H4] + 3 S-adenosyl-L-homocysteine + 3 H(+). Its function is as follows. Histone methyltransferase that specifically trimethylates 'Lys-20' of histone H4 to form H4K20me3. H4 'Lys-20' methylation is apparently not involved in the regulation of gene expression or heterochromatin function but participates in DNA damage response by giving a 'histone mark' required for the recruitment of the checkpoint protein Crb2 to sites of DNA damage. This chain is Histone-lysine N-methyltransferase set9 (set9), found in Schizosaccharomyces pombe (strain 972 / ATCC 24843) (Fission yeast).